A 125-amino-acid chain; its full sequence is RxLR effector protein Avh6 (125 aa).

Positions 1–25 (MRLSSTTFVVLAAVLLASGTAVSKA) are cleaved as a signal peptide. Positions 48 to 70 (RFLRSHHTEDGKAKLSNYDNEER) match the RxLR-dEER motif.

This sequence belongs to the RxLR effector family.

The protein localises to the secreted. It is found in the host cell. Effector that suppresses plant defense responses during the early stages of pathogen infection. Suppresses cell death induced by effectors and PAMPs in plant hosts. Triggers a hypersensitive response (HR) in the presence of Rps1d. Suppresses BAX-induced cell death and enhanced P.capsici infection in Nicotiana benthamiana. Also suppresses effector-triggered immunity induction by associating with Avr1b and Rps1b, suggesting a role in suppressing plant immunity. The chain is RxLR effector protein Avh6 from Phytophthora sojae (Soybean stem and root rot agent).